Consider the following 490-residue polypeptide: Glutamate--tRNA ligase (490 aa).

The 'HIGH' region motif lies at 9–19 (PSPTGLQHIGG). Positions 251–255 (KLSKR) match the 'KMSKS' region motif. K254 is a binding site for ATP.

Belongs to the class-I aminoacyl-tRNA synthetase family. Glutamate--tRNA ligase type 1 subfamily. In terms of assembly, monomer.

It localises to the cytoplasm. It carries out the reaction tRNA(Glu) + L-glutamate + ATP = L-glutamyl-tRNA(Glu) + AMP + diphosphate. Catalyzes the attachment of glutamate to tRNA(Glu) in a two-step reaction: glutamate is first activated by ATP to form Glu-AMP and then transferred to the acceptor end of tRNA(Glu). In Borreliella burgdorferi (strain ATCC 35210 / DSM 4680 / CIP 102532 / B31) (Borrelia burgdorferi), this protein is Glutamate--tRNA ligase.